Reading from the N-terminus, the 225-residue chain is C-reactive protein (225 aa).

A signal peptide spans 1–18 (MLVVFLCLLSVTLEATEG). The Pentraxin (PTX) domain occupies 23 to 225 (SGKVLQFKTA…TGNVLVATDN (203 aa)). Cysteines 54 and 116 form a disulfide. Ca(2+) is bound by residues Asp78, Asp157, Pro158, Asp159, and Gln169.

This sequence belongs to the pentraxin family. Homotrimer. Ca(2+) serves as cofactor.

The protein resides in the secreted. Its function is as follows. Displays several functions associated with host defense: it promotes agglutination, bacterial capsular swelling, phagocytosis, and complement fixation through its calcium-dependent binding to phosphorylcholine. The sequence is that of C-reactive protein from Danio rerio (Zebrafish).